Here is a 587-residue protein sequence, read N- to C-terminus: L-ornithine N(5)-monooxygenase (587 aa).

FAD is bound by residues 53-61 (EKHTSFQWH) and Q72. Residue K77 coordinates substrate. An NADP(+)-binding site is contributed by 235–238 (GGQS). Residues 282–285 (NEVF) and N312 contribute to the substrate site. NADP(+) is bound at residue 312-314 (NYS). Residues 488 to 511 (DNSAASGVSGASTPLTSPSEEEGK) form a disordered region. Over residues 491–505 (AASGVSGASTPLTSP) the composition is skewed to polar residues. Position 567–569 (567–569 (TLL)) interacts with FAD. S570 lines the substrate pocket.

It belongs to the lysine N(6)-hydroxylase/L-ornithine N(5)-oxygenase family. In terms of assembly, homotetramer. The cofactor is FAD.

It catalyses the reaction L-ornithine + NADPH + O2 = N(5)-hydroxy-L-ornithine + NADP(+) + H2O. The enzyme catalyses L-ornithine + NADH + O2 = N(5)-hydroxy-L-ornithine + NAD(+) + H2O. It functions in the pathway siderophore biosynthesis; ferrichrome biosynthesis. L-ornithine N(5)-monooxygenase; part of the siderophore biosynthetic pathway. Omphalotus olearius produces ferrichrome A, but no other siderophore has been detected. Ferrichrome A consists of a hexapeptide ring made up of one glycine, two serine, and three N(5)-hydroxyornithine amino acid residues, the latter acylated by trans-(alpha-methyl)-glutaconic acid residues. The biosynthesis of ferrichrome A depends on the hydroxylation of ornithine to N(5)-hydroxyornithine, catalyzed by the monooxygenase omo1. The second step, the acylation of N(5)-hydroxy-L-ornithine is probably catalyzed by the N-acyltransferase ato1. Finally, assembly of ferrichrome A is catalyzed by the nonribosomal peptide synthase (NRPS) fso1. This chain is L-ornithine N(5)-monooxygenase, found in Omphalotus olearius (Jack o'lantern).